The sequence spans 296 residues: MSDKHINLVIVTGMSGAGKTVAIQSFEDLGYFTIDNMPPALVPKFLELIEQTNENRRVALVVDMRSRLFFKEINSTLDSIESNPSIDFRILFLDATDGELVSRYKETRRSHPLAADGRVLDGIRLERELLSPLKSMSQHVVDTTKLTPRQLRKTISDQFSEGSNQASLRIEVMSFGFKYGLPLDADLVFDVRFLPNPYYQVELREKTGLDEDVFNYVMSHPESEVFYKHLLNLIVPILPAYQKEGKSVLTVAIGCTGGQHRSVAFAHCLAESLATDWSVNESHRDQNRRKETVNRS.

13–20 provides a ligand contact to ATP; sequence GMSGAGKT. Residue 63–66 coordinates GTP; that stretch reads DMRS.

Belongs to the RapZ-like family.

In terms of biological role, displays ATPase and GTPase activities. The protein is Nucleotide-binding protein M6_Spy0559 of Streptococcus pyogenes serotype M6 (strain ATCC BAA-946 / MGAS10394).